Consider the following 95-residue polypeptide: Protein K6 (95 aa).

The N-terminal stretch at 1–24 (MAPVHVLCCVSVLLATFYLTPTES) is a signal peptide.

This is Protein K6 (K6) from Human herpesvirus 8 type P (isolate GK18) (HHV-8).